The sequence spans 211 residues: MDVILLERVAKLGQMGEVVSVKEGYARNFLLPQKKALRANEMNLAAFENQKAQLEATNLETRKEAEAMGEKLAGQQFVIIRSASDSGALYGSVTIRDAAEAATAEGFTVDRKQVALIAPIKDLGIHTVMVILHPEVEVEIELNVARSPEEAELQASGKSIQDLAAEEEAQAEFEIAELFDDIGAAGMDDDDDDAPAPAQADPSSEESSEED.

Positions 180-211 (DDIGAAGMDDDDDDAPAPAQADPSSEESSEED) are disordered.

It belongs to the bacterial ribosomal protein bL9 family.

Functionally, binds to the 23S rRNA. The chain is Large ribosomal subunit protein bL9 from Jannaschia sp. (strain CCS1).